Consider the following 291-residue polypeptide: Putative fatty acid elongase 4 (291 aa).

A run of 3 helical transmembrane segments spans residues 46–66 (ILFQKYWYHSITISVLYFILI), 79–99 (FTLKYPLILWNGALAAFSIIA), and 254–274 (NLYLAFVIYVTFAILFIQFFV).

Belongs to the ELO family.

The protein resides in the membrane. It catalyses the reaction a very-long-chain acyl-CoA + malonyl-CoA + H(+) = a very-long-chain 3-oxoacyl-CoA + CO2 + CoA. It participates in lipid metabolism; fatty acid biosynthesis. Could be implicated in synthesis of very long chain fatty acids. The protein is Putative fatty acid elongase 4 (elo-4) of Caenorhabditis elegans.